The chain runs to 261 residues: Cytochrome c oxidase subunit 3 (261 aa).

Over 1–15 (MTHQTHAYHMVNPSP) the chain is Mitochondrial matrix. Residues 16–34 (WPLTGALSALLMTSGLIMW) form a helical membrane-spanning segment. The Mitochondrial intermembrane portion of the chain corresponds to 35 to 40 (FHFNST). Residues 41–66 (TLLMLGLTTNMLTMYQWWRDVIREST) traverse the membrane as a helical segment. Topologically, residues 67–72 (FQGHHT) are mitochondrial matrix. The chain crosses the membrane as a helical span at residues 73–105 (PNVQKGLRYGMILFIISEVLFFTGFFWAFYHSS). Over 106-128 (LAPTPELGGCWPPTGIHPLNPLE) the chain is Mitochondrial intermembrane. The chain crosses the membrane as a helical span at residues 129 to 152 (VPLLNTSVLLASGVSITWAHHSLM). Over 153–155 (EGN) the chain is Mitochondrial matrix. The helical transmembrane segment at 156 to 183 (RNHMLQALFITIALGVYFTLLQASEYYE) threads the bilayer. Residues 184 to 190 (APFTISD) lie on the Mitochondrial intermembrane side of the membrane. The helical transmembrane segment at 191–223 (GVYGSTFFVATGFHGLHVIIGSTFLIVCFFRQL) threads the bilayer. Residues 224-232 (KFHFTSNHH) are Mitochondrial matrix-facing. The chain crosses the membrane as a helical span at residues 233-256 (FGFEAAAWYWHFVDVVWLFLYVSI). The Mitochondrial intermembrane segment spans residues 257 to 261 (YWWGS).

This sequence belongs to the cytochrome c oxidase subunit 3 family. As to quaternary structure, component of the cytochrome c oxidase (complex IV, CIV), a multisubunit enzyme composed of 14 subunits. The complex is composed of a catalytic core of 3 subunits MT-CO1, MT-CO2 and MT-CO3, encoded in the mitochondrial DNA, and 11 supernumerary subunits COX4I, COX5A, COX5B, COX6A, COX6B, COX6C, COX7A, COX7B, COX7C, COX8 and NDUFA4, which are encoded in the nuclear genome. The complex exists as a monomer or a dimer and forms supercomplexes (SCs) in the inner mitochondrial membrane with NADH-ubiquinone oxidoreductase (complex I, CI) and ubiquinol-cytochrome c oxidoreductase (cytochrome b-c1 complex, complex III, CIII), resulting in different assemblies (supercomplex SCI(1)III(2)IV(1) and megacomplex MCI(2)III(2)IV(2)).

Its subcellular location is the mitochondrion inner membrane. The catalysed reaction is 4 Fe(II)-[cytochrome c] + O2 + 8 H(+)(in) = 4 Fe(III)-[cytochrome c] + 2 H2O + 4 H(+)(out). Component of the cytochrome c oxidase, the last enzyme in the mitochondrial electron transport chain which drives oxidative phosphorylation. The respiratory chain contains 3 multisubunit complexes succinate dehydrogenase (complex II, CII), ubiquinol-cytochrome c oxidoreductase (cytochrome b-c1 complex, complex III, CIII) and cytochrome c oxidase (complex IV, CIV), that cooperate to transfer electrons derived from NADH and succinate to molecular oxygen, creating an electrochemical gradient over the inner membrane that drives transmembrane transport and the ATP synthase. Cytochrome c oxidase is the component of the respiratory chain that catalyzes the reduction of oxygen to water. Electrons originating from reduced cytochrome c in the intermembrane space (IMS) are transferred via the dinuclear copper A center (CU(A)) of subunit 2 and heme A of subunit 1 to the active site in subunit 1, a binuclear center (BNC) formed by heme A3 and copper B (CU(B)). The BNC reduces molecular oxygen to 2 water molecules using 4 electrons from cytochrome c in the IMS and 4 protons from the mitochondrial matrix. This Antilope cervicapra (Blackbuck) protein is Cytochrome c oxidase subunit 3 (MT-CO3).